We begin with the raw amino-acid sequence, 414 residues long: Esterase FrsA (414 aa).

This sequence belongs to the FrsA family.

The enzyme catalyses a carboxylic ester + H2O = an alcohol + a carboxylate + H(+). Functionally, catalyzes the hydrolysis of esters. In Shigella flexneri serotype 5b (strain 8401), this protein is Esterase FrsA.